The sequence spans 359 residues: SAGA complex subunit Spt7 (359 aa).

In terms of assembly, component of the Spt-Ada-Gcn5 acetyltransferase (SAGA) complex consisting of wda/Taf5L, Saf6, Taf9, Taf10b, Taf12, Ada1, Spt3, Spt7, Spt20, Sf3b3, Sf3b5, Nipped-A/Tra1, a histone acetyltransferase (HAT) module made up of Gcn5, Ada2b (Isoform B), Ada3 and Sgf29, and a deubiquitinase (DUB) module made up of not/nonstop, Sgf11 and e(y)2 tethered to SAGA by Atxn7. Interacts with Ada2b; the interaction is direct.

It localises to the nucleus. In terms of biological role, component of the transcription regulatory complex SAGA, a multiprotein complex that activates transcription by remodeling chromatin and mediating histone acetylation and deubiquitination. The SAGA complex predominantly acetylates histone H3. This Drosophila melanogaster (Fruit fly) protein is SAGA complex subunit Spt7.